The following is a 517-amino-acid chain: Maturase K (517 aa).

It belongs to the intron maturase 2 family. MatK subfamily.

The protein resides in the plastid. The protein localises to the chloroplast. Usually encoded in the trnK tRNA gene intron. Probably assists in splicing its own and other chloroplast group II introns. The chain is Maturase K from Paris tetraphylla.